The sequence spans 186 residues: uncharacterized protein (186 aa).

This is an uncharacterized protein from Mycoplasma genitalium (strain ATCC 33530 / DSM 19775 / NCTC 10195 / G37) (Mycoplasmoides genitalium).